A 98-amino-acid polypeptide reads, in one-letter code: Large ribosomal subunit protein uL23 (98 aa).

The protein belongs to the universal ribosomal protein uL23 family. In terms of assembly, part of the 50S ribosomal subunit. Contacts protein L29, and trigger factor when it is bound to the ribosome.

One of the early assembly proteins it binds 23S rRNA. One of the proteins that surrounds the polypeptide exit tunnel on the outside of the ribosome. Forms the main docking site for trigger factor binding to the ribosome. This chain is Large ribosomal subunit protein uL23, found in Lactobacillus johnsonii (strain CNCM I-12250 / La1 / NCC 533).